Here is a 185-residue protein sequence, read N- to C-terminus: Ribosome-recycling factor (185 aa).

Belongs to the RRF family.

The protein resides in the cytoplasm. In terms of biological role, responsible for the release of ribosomes from messenger RNA at the termination of protein biosynthesis. May increase the efficiency of translation by recycling ribosomes from one round of translation to another. The protein is Ribosome-recycling factor of Thermobifida fusca (strain YX).